A 144-amino-acid polypeptide reads, in one-letter code: 3-dehydroquinate dehydratase (144 aa).

The Proton acceptor role is filled by Tyr-24. Substrate-binding residues include Asn-76, His-82, and Asp-89. Catalysis depends on His-102, which acts as the Proton donor. Substrate is bound by residues 103-104 (LS) and Arg-113.

Belongs to the type-II 3-dehydroquinase family. Homododecamer.

It catalyses the reaction 3-dehydroquinate = 3-dehydroshikimate + H2O. The protein operates within metabolic intermediate biosynthesis; chorismate biosynthesis; chorismate from D-erythrose 4-phosphate and phosphoenolpyruvate: step 3/7. Its function is as follows. Catalyzes a trans-dehydration via an enolate intermediate. This Bordetella petrii (strain ATCC BAA-461 / DSM 12804 / CCUG 43448) protein is 3-dehydroquinate dehydratase.